Here is a 105-residue protein sequence, read N- to C-terminus: Small ribosomal subunit protein uS10 (105 aa).

Belongs to the universal ribosomal protein uS10 family. In terms of assembly, part of the 30S ribosomal subunit.

Functionally, involved in the binding of tRNA to the ribosomes. In Rickettsia felis (strain ATCC VR-1525 / URRWXCal2) (Rickettsia azadi), this protein is Small ribosomal subunit protein uS10.